The chain runs to 420 residues: Gamma-glutamyl phosphate reductase (420 aa).

This sequence belongs to the gamma-glutamyl phosphate reductase family.

It localises to the cytoplasm. It catalyses the reaction L-glutamate 5-semialdehyde + phosphate + NADP(+) = L-glutamyl 5-phosphate + NADPH + H(+). It functions in the pathway amino-acid biosynthesis; L-proline biosynthesis; L-glutamate 5-semialdehyde from L-glutamate: step 2/2. Catalyzes the NADPH-dependent reduction of L-glutamate 5-phosphate into L-glutamate 5-semialdehyde and phosphate. The product spontaneously undergoes cyclization to form 1-pyrroline-5-carboxylate. The sequence is that of Gamma-glutamyl phosphate reductase from Chlorobaculum parvum (strain DSM 263 / NCIMB 8327) (Chlorobium vibrioforme subsp. thiosulfatophilum).